The sequence spans 327 residues: Malate dehydrogenase (327 aa).

An NAD(+)-binding site is contributed by 12–18; sequence GAAGQIG. Arg93 and Arg99 together coordinate substrate. NAD(+) is bound by residues Asn106, Gln113, and 130–132; that span reads VGN. Substrate is bound by residues Asn132 and Arg163. His188 serves as the catalytic Proton acceptor.

This sequence belongs to the LDH/MDH superfamily. MDH type 2 family.

The enzyme catalyses (S)-malate + NAD(+) = oxaloacetate + NADH + H(+). Its function is as follows. Catalyzes the reversible oxidation of malate to oxaloacetate. This is Malate dehydrogenase from Cupriavidus pinatubonensis (strain JMP 134 / LMG 1197) (Cupriavidus necator (strain JMP 134)).